The sequence spans 210 residues: Thymidylate kinase (210 aa).

An ATP-binding site is contributed by 10–17 (GPEGAGKS).

This sequence belongs to the thymidylate kinase family.

The enzyme catalyses dTMP + ATP = dTDP + ADP. In terms of biological role, phosphorylation of dTMP to form dTDP in both de novo and salvage pathways of dTTP synthesis. The chain is Thymidylate kinase from Pseudomonas putida (strain GB-1).